The primary structure comprises 451 residues: uncharacterized protein (451 aa).

Positions 305, 316, 384, 414, and 428 each coordinate Mn(2+).

Belongs to the peptidase M24B family. It depends on Mn(2+) as a cofactor.

This is an uncharacterized protein from Schizosaccharomyces pombe (strain 972 / ATCC 24843) (Fission yeast).